A 392-amino-acid chain; its full sequence is GTPase Obg (392 aa).

Positions 1-159 (MKFVDEATIK…RELRLELLLL (159 aa)) constitute an Obg domain. An OBG-type G domain is found at 160-333 (ADVGMLGLPN…VCNELSDFMD (174 aa)). Residues 166–173 (GLPNAGKS), 191–195 (FTTLI), 213–216 (DIPG), 283–286 (NKTD), and 314–316 (AAV) each bind GTP. Mg(2+) contacts are provided by S173 and T193. The disordered stretch occupies residues 364-392 (GKNVVTEDGDDDDDWDDEEDDGHVIYARD). The span at 370–384 (EDGDDDDDWDDEEDD) shows a compositional bias: acidic residues.

The protein belongs to the TRAFAC class OBG-HflX-like GTPase superfamily. OBG GTPase family. Monomer. Mg(2+) is required as a cofactor.

The protein localises to the cytoplasm. In terms of biological role, an essential GTPase which binds GTP, GDP and possibly (p)ppGpp with moderate affinity, with high nucleotide exchange rates and a fairly low GTP hydrolysis rate. Plays a role in control of the cell cycle, stress response, ribosome biogenesis and in those bacteria that undergo differentiation, in morphogenesis control. This is GTPase Obg from Aliivibrio salmonicida (strain LFI1238) (Vibrio salmonicida (strain LFI1238)).